Consider the following 256-residue polypeptide: uncharacterized protein (256 aa).

A signal peptide spans 1 to 22; that stretch reads MKSIKRIGLCISLLILSIFVTS. Cys-23 carries N-palmitoyl cysteine lipidation. Residue Cys-23 is the site of S-diacylglycerol cysteine attachment.

This sequence belongs to the staphylococcal tandem lipoprotein family.

The protein localises to the cell membrane. This is an uncharacterized protein from Staphylococcus aureus (strain USA300).